The chain runs to 390 residues: Digeranylgeranylglycerophospholipid reductase (390 aa).

10 residues coordinate FAD: alanine 18, glutamate 37, cysteine 48, alanine 49, alanine 51, arginine 98, valine 122, aspartate 278, glycine 290, and isoleucine 291. Residue valine 368 coordinates a 2,3-bis-O-(geranylgeranyl)-sn-glycerol 1-phospholipid.

The protein belongs to the geranylgeranyl reductase family. DGGGPL reductase subfamily. FAD serves as cofactor.

The enzyme catalyses a 2,3-bis-O-phytanyl-sn-glycerol 1-phospholipid + 8 A = a 2,3-bis-O-(geranylgeranyl)-sn-glycerol 1-phospholipid + 8 AH2. It carries out the reaction 2,3-bis-O-(phytanyl)-sn-glycerol 1-phosphate + 8 A = 2,3-bis-O-(geranylgeranyl)-sn-glycerol 1-phosphate + 8 AH2. It catalyses the reaction CDP-2,3-bis-O-(geranylgeranyl)-sn-glycerol + 8 AH2 = CDP-2,3-bis-O-(phytanyl)-sn-glycerol + 8 A. The catalysed reaction is archaetidylserine + 8 AH2 = 2,3-bis-O-phytanyl-sn-glycero-3-phospho-L-serine + 8 A. Its pathway is membrane lipid metabolism; glycerophospholipid metabolism. Its function is as follows. Is involved in the reduction of 2,3-digeranylgeranylglycerophospholipids (unsaturated archaeols) into 2,3-diphytanylglycerophospholipids (saturated archaeols) in the biosynthesis of archaeal membrane lipids. Catalyzes the formation of archaetidic acid (2,3-di-O-phytanyl-sn-glyceryl phosphate) from 2,3-di-O-geranylgeranylglyceryl phosphate (DGGGP) via the hydrogenation of each double bond of the isoprenoid chains. Is also probably able to reduce double bonds of geranyl groups in CDP-2,3-bis-O-(geranylgeranyl)-sn-glycerol and archaetidylserine, thus acting at various stages in the biosynthesis of archaeal membrane lipids. The chain is Digeranylgeranylglycerophospholipid reductase from Methanococcus maripaludis (strain C7 / ATCC BAA-1331).